The following is a 362-amino-acid chain: tRNA-specific 2-thiouridylase MnmA (362 aa).

ATP-binding positions include 13 to 20 (GLSGGVDS) and Met39. The segment at 99–101 (NPD) is interaction with target base in tRNA. The active-site Nucleophile is Cys104. Cysteines 104 and 200 form a disulfide. Gly128 lines the ATP pocket. The interval 150-152 (KDQ) is interaction with tRNA. The Cysteine persulfide intermediate role is filled by Cys200.

It belongs to the MnmA/TRMU family.

Its subcellular location is the cytoplasm. The enzyme catalyses S-sulfanyl-L-cysteinyl-[protein] + uridine(34) in tRNA + AH2 + ATP = 2-thiouridine(34) in tRNA + L-cysteinyl-[protein] + A + AMP + diphosphate + H(+). Its function is as follows. Catalyzes the 2-thiolation of uridine at the wobble position (U34) of tRNA, leading to the formation of s(2)U34. The polypeptide is tRNA-specific 2-thiouridylase MnmA (Coxiella burnetii (strain Dugway 5J108-111)).